Consider the following 399-residue polypeptide: Immunoglobulin heavy constant gamma 1 (399 aa).

The segment at 1-21 (ASTKGPSVFPLAPSSKSTSGG) is disordered. The segment at 1–98 (ASTKGPSVFP…PSNTKVDKKV (98 aa)) is CH1. Topologically, residues 1 to 350 (ASTKGPSVFP…DGELDGLWTT (350 aa)) are extracellular. Ig-like domains follow at residues 6–99 (PSVF…KKVE), 121–220 (PSVF…KTIS), and 229–325 (PQVY…KSLS). Residues cysteine 27 and cysteine 83 are joined by a disulfide bond. Residues 99-110 (EPKSCDKTHTCP) form a hinge region. The tract at residues 111–223 (PCPAPELLGG…PIEKTISKAK (113 aa)) is CH2. 2 disulfide bridges follow: cysteine 144–cysteine 204 and cysteine 250–cysteine 308. Asparagine 180 carries an N-linked (GlcNAc...) (complex) asparagine glycan. Positions 224–330 (GQPREPQVYT…QKSLSLSPEL (107 aa)) are CH3. A helical transmembrane segment spans residues 351–371 (ITIFITLFLLSVCYSATVTFF). Topologically, residues 372 to 399 (KVKWIFSSVVDLKQTIIPDYRNMIGQGA) are cytoplasmic.

In terms of assembly, immunoglobulins are composed of two identical heavy chains and two identical light chains; disulfide-linked. Interacts with FCGR1A; this interaction mediates IgG effector functions on monocytes. Interacts with FCGR2A and FCGR3A. Post-translationally, glycosylation on Asn-180 is required for interaction with Fc receptors and ability to activate the complement pathway. (Microbial infection) Deglycosylation on Asn-180 by S.pyogenes EndoS or Endos2 endoglucosidases prevents interaction between immunoglobulin-gamma (IgG) and Fc receptors, impairing ability to activate the complement pathway.

The protein resides in the secreted. It is found in the cell membrane. Its function is as follows. Constant region of immunoglobulin heavy chains. Immunoglobulins, also known as antibodies, are membrane-bound or secreted glycoproteins produced by B lymphocytes. In the recognition phase of humoral immunity, the membrane-bound immunoglobulins serve as receptors which, upon binding of a specific antigen, trigger the clonal expansion and differentiation of B lymphocytes into immunoglobulins-secreting plasma cells. Secreted immunoglobulins mediate the effector phase of humoral immunity, which results in the elimination of bound antigens. The antigen binding site is formed by the variable domain of one heavy chain, together with that of its associated light chain. Thus, each immunoglobulin has two antigen binding sites with remarkable affinity for a particular antigen. The variable domains are assembled by a process called V-(D)-J rearrangement and can then be subjected to somatic hypermutations which, after exposure to antigen and selection, allow affinity maturation for a particular antigen. Mediates IgG effector functions on monocytes triggering ADCC of virus-infected cells. This is Immunoglobulin heavy constant gamma 1 from Homo sapiens (Human).